The primary structure comprises 248 residues: Carbohydrate deacetylase (248 aa).

2 residues coordinate Mg(2+): His-59 and His-121.

It belongs to the YdjC deacetylase family. Mg(2+) is required as a cofactor.

Functionally, probably catalyzes the deacetylation of acetylated carbohydrates an important step in the degradation of oligosaccharides. This is Carbohydrate deacetylase from Brevibacillus brevis (strain 47 / JCM 6285 / NBRC 100599).